A 388-amino-acid polypeptide reads, in one-letter code: Mannitol-1-phosphate 5-dehydrogenase (388 aa).

Residue 5-16 (AIQFGGGNIGRG) participates in NAD(+) binding. Lysine 213 is an active-site residue.

It belongs to the mannitol dehydrogenase family. In terms of assembly, monomer.

The enzyme catalyses D-mannitol 1-phosphate + NAD(+) = beta-D-fructose 6-phosphate + NADH + H(+). In terms of biological role, catalyzes the NAD(H)-dependent interconversion of D-fructose 6-phosphate and D-mannitol 1-phosphate in the metabolism of mannitol. Has a strong preference for NADH over NADPH. This Aspergillus niger (strain ATCC MYA-4892 / CBS 513.88 / FGSC A1513) protein is Mannitol-1-phosphate 5-dehydrogenase (mpdA).